Here is a 371-residue protein sequence, read N- to C-terminus: uncharacterized protein (371 aa).

The 231-residue stretch at Val20–Ile250 folds into the ABC transporter domain. Gly52 to Ser59 is an ATP binding site.

Belongs to the ABC transporter superfamily.

The protein localises to the cell inner membrane. Probably part of a binding-protein-dependent transport system y4oPQRS. This system probably transports a sugar-like molecule. Probably responsible for energy coupling to the transport system. This is an uncharacterized protein from Sinorhizobium fredii (strain NBRC 101917 / NGR234).